The primary structure comprises 339 residues: Phenylalanine--tRNA ligase alpha subunit (339 aa).

Glutamate 254 is a binding site for Mg(2+).

Belongs to the class-II aminoacyl-tRNA synthetase family. Phe-tRNA synthetase alpha subunit type 1 subfamily. In terms of assembly, tetramer of two alpha and two beta subunits. It depends on Mg(2+) as a cofactor.

It localises to the cytoplasm. It carries out the reaction tRNA(Phe) + L-phenylalanine + ATP = L-phenylalanyl-tRNA(Phe) + AMP + diphosphate + H(+). This is Phenylalanine--tRNA ligase alpha subunit from Lachnoclostridium phytofermentans (strain ATCC 700394 / DSM 18823 / ISDg) (Clostridium phytofermentans).